The chain runs to 237 residues: Class B acid phosphatase (237 aa).

A signal peptide spans M1–A25. The active-site Nucleophile is the D69. Mg(2+) is bound by residues D69 and D71. Residue D71 is the Proton donor of the active site. Residues T137–G138 and K177 contribute to the substrate site. D192 is a binding site for Mg(2+).

Belongs to the class B bacterial acid phosphatase family. As to quaternary structure, homotetramer. It depends on Mg(2+) as a cofactor.

Its subcellular location is the periplasm. It carries out the reaction a phosphate monoester + H2O = an alcohol + phosphate. Functionally, dephosphorylates several organic phosphate monoesters. Also has a phosphotransferase activity catalyzing the transfer of low-energy phosphate groups from organic phosphate monoesters to free hydroxyl groups of various organic compounds. This is Class B acid phosphatase from Klebsiella pneumoniae (strain 342).